The following is a 341-amino-acid chain: L-threonine 3-dehydrogenase (341 aa).

Cys38 is a binding site for Zn(2+). Residues Thr40 and His43 each act as charge relay system in the active site. Zn(2+) is bound by residues His63, Glu64, Cys93, Cys96, Cys99, and Cys107. NAD(+) contacts are provided by residues Ile175, Asp195, Arg200, 262-264, and 286-287; these read LGI and IY.

The protein belongs to the zinc-containing alcohol dehydrogenase family. In terms of assembly, homotetramer. Requires Zn(2+) as cofactor.

It is found in the cytoplasm. The catalysed reaction is L-threonine + NAD(+) = (2S)-2-amino-3-oxobutanoate + NADH + H(+). Its pathway is amino-acid degradation; L-threonine degradation via oxydo-reductase pathway; glycine from L-threonine: step 1/2. Catalyzes the NAD(+)-dependent oxidation of L-threonine to 2-amino-3-ketobutyrate. In Shewanella pealeana (strain ATCC 700345 / ANG-SQ1), this protein is L-threonine 3-dehydrogenase.